A 660-amino-acid polypeptide reads, in one-letter code: DNA ligase (660 aa).

NAD(+) is bound by residues 33–37 (DFVYD), 82–83 (SL), and Glu-110. Lys-112 acts as the N6-AMP-lysine intermediate in catalysis. Residues Arg-133, Glu-167, Lys-281, and Lys-305 each contribute to the NAD(+) site. Zn(2+)-binding residues include Cys-396, Cys-399, Cys-412, and Cys-417. Residues 583–660 (DENRLLAGKK…SFEDIKSYLN (78 aa)) form the BRCT domain.

It belongs to the NAD-dependent DNA ligase family. LigA subfamily. Mg(2+) is required as a cofactor. Requires Mn(2+) as cofactor.

It catalyses the reaction NAD(+) + (deoxyribonucleotide)n-3'-hydroxyl + 5'-phospho-(deoxyribonucleotide)m = (deoxyribonucleotide)n+m + AMP + beta-nicotinamide D-nucleotide.. Functionally, DNA ligase that catalyzes the formation of phosphodiester linkages between 5'-phosphoryl and 3'-hydroxyl groups in double-stranded DNA using NAD as a coenzyme and as the energy source for the reaction. It is essential for DNA replication and repair of damaged DNA. This chain is DNA ligase, found in Borrelia garinii subsp. bavariensis (strain ATCC BAA-2496 / DSM 23469 / PBi) (Borreliella bavariensis).